A 124-amino-acid polypeptide reads, in one-letter code: Large ribosomal subunit protein bL12 (124 aa).

Belongs to the bacterial ribosomal protein bL12 family. As to quaternary structure, homodimer. Part of the ribosomal stalk of the 50S ribosomal subunit. Forms a multimeric L10(L12)X complex, where L10 forms an elongated spine to which 2 to 4 L12 dimers bind in a sequential fashion. Binds GTP-bound translation factors.

In terms of biological role, forms part of the ribosomal stalk which helps the ribosome interact with GTP-bound translation factors. Is thus essential for accurate translation. This is Large ribosomal subunit protein bL12 from Bacteroides thetaiotaomicron (strain ATCC 29148 / DSM 2079 / JCM 5827 / CCUG 10774 / NCTC 10582 / VPI-5482 / E50).